Consider the following 330-residue polypeptide: Pyridoxal 5'-phosphate synthase subunit PdxS (330 aa).

D23 is a D-ribose 5-phosphate binding site. The active-site Schiff-base intermediate with D-ribose 5-phosphate is K80. G152 lines the D-ribose 5-phosphate pocket. R164 is a D-glyceraldehyde 3-phosphate binding site. D-ribose 5-phosphate is bound by residues G250 and 271-272; that span reads GS.

This sequence belongs to the PdxS/SNZ family. In terms of assembly, in the presence of PdxT, forms a dodecamer of heterodimers.

The enzyme catalyses aldehydo-D-ribose 5-phosphate + D-glyceraldehyde 3-phosphate + L-glutamine = pyridoxal 5'-phosphate + L-glutamate + phosphate + 3 H2O + H(+). It functions in the pathway cofactor biosynthesis; pyridoxal 5'-phosphate biosynthesis. Catalyzes the formation of pyridoxal 5'-phosphate from ribose 5-phosphate (RBP), glyceraldehyde 3-phosphate (G3P) and ammonia. The ammonia is provided by the PdxT subunit. Can also use ribulose 5-phosphate and dihydroxyacetone phosphate as substrates, resulting from enzyme-catalyzed isomerization of RBP and G3P, respectively. The polypeptide is Pyridoxal 5'-phosphate synthase subunit PdxS (Methanocaldococcus jannaschii (strain ATCC 43067 / DSM 2661 / JAL-1 / JCM 10045 / NBRC 100440) (Methanococcus jannaschii)).